A 287-amino-acid chain; its full sequence is Acetyl-coenzyme A carboxylase carboxyl transferase subunit beta (287 aa).

Residues 33-287 (LFSKCPGCKH…TLLAFHGGQA (255 aa)) enclose the CoA carboxyltransferase N-terminal domain. Zn(2+)-binding residues include Cys37, Cys40, Cys55, and Cys58. A C4-type zinc finger spans residues 37–58 (CPGCKHTIYQKDLGNDSVCPNC).

The protein belongs to the AccD/PCCB family. Acetyl-CoA carboxylase is a heterohexamer composed of biotin carboxyl carrier protein (AccB), biotin carboxylase (AccC) and two subunits each of ACCase subunit alpha (AccA) and ACCase subunit beta (AccD). It depends on Zn(2+) as a cofactor.

It is found in the cytoplasm. It carries out the reaction N(6)-carboxybiotinyl-L-lysyl-[protein] + acetyl-CoA = N(6)-biotinyl-L-lysyl-[protein] + malonyl-CoA. Its pathway is lipid metabolism; malonyl-CoA biosynthesis; malonyl-CoA from acetyl-CoA: step 1/1. Its function is as follows. Component of the acetyl coenzyme A carboxylase (ACC) complex. Biotin carboxylase (BC) catalyzes the carboxylation of biotin on its carrier protein (BCCP) and then the CO(2) group is transferred by the transcarboxylase to acetyl-CoA to form malonyl-CoA. In Streptococcus sanguinis (strain SK36), this protein is Acetyl-coenzyme A carboxylase carboxyl transferase subunit beta.